A 58-amino-acid chain; its full sequence is Large ribosomal subunit protein bL32 (58 aa).

A compositionally biased stretch (basic residues) spans 1-19; sequence MAVPKRKTSKSNTKMRRAA. Positions 1–22 are disordered; that stretch reads MAVPKRKTSKSNTKMRRAANSK.

The protein belongs to the bacterial ribosomal protein bL32 family.

This chain is Large ribosomal subunit protein bL32, found in Clostridioides difficile (strain 630) (Peptoclostridium difficile).